Consider the following 205-residue polypeptide: uncharacterized protein (205 aa).

The HTH tetR-type domain occupies 11-71 (DKRQAEILEA…RIIETGLDEG (61 aa)). The segment at residues 34 to 53 (TMKDVVEESGFSRGGVYLYF) is a DNA-binding region (H-T-H motif).

This is an uncharacterized protein from Bacillus subtilis (strain 168).